A 51-amino-acid polypeptide reads, in one-letter code: MTSWPGGSFGPDPLLALLVVILLARLILWSCLGTYIDYRLAQRRPQKPKQD.

A helical membrane pass occupies residues Pro-13–Gly-33.

The protein resides in the membrane. In Homo sapiens (Human), this protein is Small integral membrane protein 38.